The sequence spans 170 residues: Adenine phosphoribosyltransferase (170 aa).

The protein belongs to the purine/pyrimidine phosphoribosyltransferase family. In terms of assembly, homodimer.

It localises to the cytoplasm. It carries out the reaction AMP + diphosphate = 5-phospho-alpha-D-ribose 1-diphosphate + adenine. Its pathway is purine metabolism; AMP biosynthesis via salvage pathway; AMP from adenine: step 1/1. Functionally, catalyzes a salvage reaction resulting in the formation of AMP, that is energically less costly than de novo synthesis. The polypeptide is Adenine phosphoribosyltransferase (Lysinibacillus sphaericus (strain C3-41)).